The following is a 361-amino-acid chain: PTI1-like tyrosine-protein kinase 1 (361 aa).

The interval 16–43 (EEQQLKSSQQQSDANHKNSKPAPVAKHE) is disordered. The 283-residue stretch at 68 to 350 (FGSKALIGEG…IVVKALQPLL (283 aa)) folds into the Protein kinase domain. Residues 74 to 82 (IGEGSYGRV) and Lys-96 contribute to the ATP site. Catalysis depends on Asp-200, which acts as the Proton acceptor.

The protein belongs to the protein kinase superfamily. Tyr protein kinase family. As to quaternary structure, interacts with OXI1. Post-translationally, autophosphorylated and phosphorylated by OXI1.

It localises to the cell membrane. It carries out the reaction L-tyrosyl-[protein] + ATP = O-phospho-L-tyrosyl-[protein] + ADP + H(+). This Arabidopsis thaliana (Mouse-ear cress) protein is PTI1-like tyrosine-protein kinase 1 (PTI11).